The chain runs to 158 residues: uncharacterized protein (158 aa).

This is an uncharacterized protein from Pasteurella multocida (strain Pm70).